An 874-amino-acid chain; its full sequence is Alanine--tRNA ligase (874 aa).

Zn(2+) is bound by residues histidine 563, histidine 567, cysteine 664, and histidine 668.

It belongs to the class-II aminoacyl-tRNA synthetase family. It depends on Zn(2+) as a cofactor.

Its subcellular location is the cytoplasm. It catalyses the reaction tRNA(Ala) + L-alanine + ATP = L-alanyl-tRNA(Ala) + AMP + diphosphate. Its function is as follows. Catalyzes the attachment of alanine to tRNA(Ala) in a two-step reaction: alanine is first activated by ATP to form Ala-AMP and then transferred to the acceptor end of tRNA(Ala). Also edits incorrectly charged Ser-tRNA(Ala) and Gly-tRNA(Ala) via its editing domain. This chain is Alanine--tRNA ligase, found in Methylobacillus flagellatus (strain ATCC 51484 / DSM 6875 / VKM B-1610 / KT).